A 161-amino-acid chain; its full sequence is S-protein homolog 2 (161 aa).

Residues 1 to 24 (MDIPKQYLSLFILIIFITTKLSQA) form the signal peptide. N75, N106, and N157 each carry an N-linked (GlcNAc...) asparagine glycan.

The protein belongs to the plant self-incompatibility (S1) protein family.

It localises to the secreted. The sequence is that of S-protein homolog 2 from Arabidopsis thaliana (Mouse-ear cress).